Consider the following 364-residue polypeptide: Chorismate synthase (364 aa).

A disordered region spans residues 41–60 (MQHDLDRRRPGTSRYTTARR). The NADP(+) site is built by Arg-48 and Arg-54. FMN-binding positions include 125–127 (RSS), 238–239 (NA), Gly-278, 293–297 (KPTSS), and Arg-319.

Belongs to the chorismate synthase family. As to quaternary structure, homotetramer. The cofactor is FMNH2.

It catalyses the reaction 5-O-(1-carboxyvinyl)-3-phosphoshikimate = chorismate + phosphate. It functions in the pathway metabolic intermediate biosynthesis; chorismate biosynthesis; chorismate from D-erythrose 4-phosphate and phosphoenolpyruvate: step 7/7. In terms of biological role, catalyzes the anti-1,4-elimination of the C-3 phosphate and the C-6 proR hydrogen from 5-enolpyruvylshikimate-3-phosphate (EPSP) to yield chorismate, which is the branch point compound that serves as the starting substrate for the three terminal pathways of aromatic amino acid biosynthesis. This reaction introduces a second double bond into the aromatic ring system. The protein is Chorismate synthase of Shewanella sp. (strain ANA-3).